Reading from the N-terminus, the 349-residue chain is Holliday junction branch migration complex subunit RuvB (349 aa).

The segment at 1–186 (MSEDYLDRDV…FGFTAHMDFY (186 aa)) is large ATPase domain (RuvB-L). ATP contacts are provided by residues Leu25, Arg26, Gly67, Lys70, Thr71, Ser72, 133-135 (EDF), Arg176, Tyr186, and Arg223. Residue Thr71 participates in Mg(2+) binding. The segment at 187-257 (EPTELEGVLA…VAKAALAVYD (71 aa)) is small ATPAse domain (RuvB-S). Residues 260 to 349 (ELGLDRLDRA…GLSQPGLFES (90 aa)) form a head domain (RuvB-H) region. DNA contacts are provided by Arg315 and Arg320.

The protein belongs to the RuvB family. As to quaternary structure, homohexamer. Forms an RuvA(8)-RuvB(12)-Holliday junction (HJ) complex. HJ DNA is sandwiched between 2 RuvA tetramers; dsDNA enters through RuvA and exits via RuvB. An RuvB hexamer assembles on each DNA strand where it exits the tetramer. Each RuvB hexamer is contacted by two RuvA subunits (via domain III) on 2 adjacent RuvB subunits; this complex drives branch migration. In the full resolvosome a probable DNA-RuvA(4)-RuvB(12)-RuvC(2) complex forms which resolves the HJ.

It localises to the cytoplasm. It carries out the reaction ATP + H2O = ADP + phosphate + H(+). Its function is as follows. The RuvA-RuvB-RuvC complex processes Holliday junction (HJ) DNA during genetic recombination and DNA repair, while the RuvA-RuvB complex plays an important role in the rescue of blocked DNA replication forks via replication fork reversal (RFR). RuvA specifically binds to HJ cruciform DNA, conferring on it an open structure. The RuvB hexamer acts as an ATP-dependent pump, pulling dsDNA into and through the RuvAB complex. RuvB forms 2 homohexamers on either side of HJ DNA bound by 1 or 2 RuvA tetramers; 4 subunits per hexamer contact DNA at a time. Coordinated motions by a converter formed by DNA-disengaged RuvB subunits stimulates ATP hydrolysis and nucleotide exchange. Immobilization of the converter enables RuvB to convert the ATP-contained energy into a lever motion, pulling 2 nucleotides of DNA out of the RuvA tetramer per ATP hydrolyzed, thus driving DNA branch migration. The RuvB motors rotate together with the DNA substrate, which together with the progressing nucleotide cycle form the mechanistic basis for DNA recombination by continuous HJ branch migration. Branch migration allows RuvC to scan DNA until it finds its consensus sequence, where it cleaves and resolves cruciform DNA. The protein is Holliday junction branch migration complex subunit RuvB of Mycobacterium leprae (strain Br4923).